The primary structure comprises 157 residues: 2-C-methyl-D-erythritol 2,4-cyclodiphosphate synthase (157 aa).

Positions 9 and 11 each coordinate a divalent metal cation. Residues 9 to 11 (DVH) and 35 to 36 (HS) contribute to the 4-CDP-2-C-methyl-D-erythritol 2-phosphate site. Residue H43 coordinates a divalent metal cation. Residues 57 to 59 (DIG), 62 to 66 (FPETD), 133 to 136 (TTME), F140, and K143 each bind 4-CDP-2-C-methyl-D-erythritol 2-phosphate.

It belongs to the IspF family. Homotrimer. The cofactor is a divalent metal cation.

The enzyme catalyses 4-CDP-2-C-methyl-D-erythritol 2-phosphate = 2-C-methyl-D-erythritol 2,4-cyclic diphosphate + CMP. It functions in the pathway isoprenoid biosynthesis; isopentenyl diphosphate biosynthesis via DXP pathway; isopentenyl diphosphate from 1-deoxy-D-xylulose 5-phosphate: step 4/6. Its function is as follows. Involved in the biosynthesis of isopentenyl diphosphate (IPP) and dimethylallyl diphosphate (DMAPP), two major building blocks of isoprenoid compounds. Catalyzes the conversion of 4-diphosphocytidyl-2-C-methyl-D-erythritol 2-phosphate (CDP-ME2P) to 2-C-methyl-D-erythritol 2,4-cyclodiphosphate (ME-CPP) with a corresponding release of cytidine 5-monophosphate (CMP). This Enterococcus faecalis (strain ATCC 700802 / V583) protein is 2-C-methyl-D-erythritol 2,4-cyclodiphosphate synthase.